We begin with the raw amino-acid sequence, 600 residues long: ATP-dependent RNA helicase DDX55 (600 aa).

Residues W9–S37 carry the Q motif motif. In terms of domain architecture, Helicase ATP-binding spans I40–V223. A53–T60 contributes to the ATP binding site. Residues D171–D174 carry the DEAD box motif. The Helicase C-terminal domain maps to K254–D402. The segment covering E500–R513 has biased composition (basic and acidic residues). Residues E500–D550 are disordered. Basic residues predominate over residues K514–K537. The segment at K533–K562 is important for nuclear localization. A phosphoserine mark is found at S544 and S594.

Belongs to the DEAD box helicase family. DDX55/SPB4 subfamily. In terms of assembly, interacts with 28S rRNA. Interacts with double-stranded RNA substrates in vitro; the interaction stimulates ATPase activity.

The protein localises to the nucleus. It is found in the nucleoplasm. It catalyses the reaction ATP + H2O = ADP + phosphate + H(+). Functionally, probable ATP-binding RNA helicase. Has ATPase activity and is involved in the maturation of precursor large subunit rRNAs. The sequence is that of ATP-dependent RNA helicase DDX55 from Homo sapiens (Human).